Here is a 267-residue protein sequence, read N- to C-terminus: uncharacterized protein (267 aa).

A WD repeat occupies proline 50–threonine 90.

This is an uncharacterized protein from Deinococcus radiodurans (strain ATCC 13939 / DSM 20539 / JCM 16871 / CCUG 27074 / LMG 4051 / NBRC 15346 / NCIMB 9279 / VKM B-1422 / R1).